The primary structure comprises 537 residues: MATGSTELLIGWCIFGVLLLAILAFCWVYVRKYQSHQESEVISTITAISSLAIALITSALLPVDIFLVSFMKNHNGTFKDWAENNDTRIQIENTVLIGYYTLYSIILFCVFLWIPFVYFYYEEKDDTDGSHCSQIGSALKYTSGFVLVCSCLLLIGAFAPLDIPSKANATELDKIKLLFQNLGSSNGLAALSFSISSLTLIGMLAAITYTAYGMSALPLNLIKGKRNAHYERLENSEDIEEVEQQVENIKSKCKDGRPLSSKDRQALYKLQEKLRTLKRKDRHLEHHENNCWTKCCLVMRPFKIVWGILFILVALLFIVSLFLSNLDKALHSAGINTGFIIFGTNLTNPLNILLPVLQTVFPLDYIFITTITMYFIFTSMAGIRNMGIWFFWIRLYKIRRRRTRPQALLFLCMILLLIVLHTSYMIYSLAPQYVMYGSQKYLWENNSTQETAIGNSSALVLKDCDASAPEDQCTVTRTYLFLHKFWFFSSIYYFGNWAFIVVFVIGLIVSCCKGKKSVIEGEVEDDDSDLSDDEDHP.

The Extracellular segment spans residues 1–7 (MATGSTE). A helical membrane pass occupies residues 8 to 28 (LLIGWCIFGVLLLAILAFCWV). At 29–47 (YVRKYQSHQESEVISTITA) the chain is on the cytoplasmic side. A helical membrane pass occupies residues 48–68 (ISSLAIALITSALLPVDIFLV). Residues 69-98 (SFMKNHNGTFKDWAENNDTRIQIENTVLIG) lie on the Extracellular side of the membrane. 2 N-linked (GlcNAc...) asparagine glycosylation sites follow: N75 and N85. A helical membrane pass occupies residues 99-119 (YYTLYSIILFCVFLWIPFVYF). At 120–142 (YYEEKDDTDGSHCSQIGSALKYT) the chain is on the cytoplasmic side. Residues 143–163 (SGFVLVCSCLLLIGAFAPLDI) form a helical membrane-spanning segment. At 164 to 186 (PSKANATELDKIKLLFQNLGSSN) the chain is on the extracellular side. N-linked (GlcNAc...) asparagine glycosylation is present at N168. Residues 187 to 207 (GLAALSFSISSLTLIGMLAAI) traverse the membrane as a helical segment. Topologically, residues 208–303 (TYTAYGMSAL…KCCLVMRPFK (96 aa)) are cytoplasmic. Residues 304–324 (IVWGILFILVALLFIVSLFLS) traverse the membrane as a helical segment. The Extracellular segment spans residues 325–362 (NLDKALHSAGINTGFIIFGTNLTNPLNILLPVLQTVFP). N-linked (GlcNAc...) asparagine glycosylation is present at N345. Residues 363-383 (LDYIFITTITMYFIFTSMAGI) form a helical membrane-spanning segment. At 384 to 406 (RNMGIWFFWIRLYKIRRRRTRPQ) the chain is on the cytoplasmic side. The chain crosses the membrane as a helical span at residues 407 to 427 (ALLFLCMILLLIVLHTSYMIY). Over 428-484 (SLAPQYVMYGSQKYLWENNSTQETAIGNSSALVLKDCDASAPEDQCTVTRTYLFLHK) the chain is Extracellular. Residues N445, N446, and N455 are each glycosylated (N-linked (GlcNAc...) asparagine). Residues 485–505 (FWFFSSIYYFGNWAFIVVFVI) traverse the membrane as a helical segment. Topologically, residues 506–537 (GLIVSCCKGKKSVIEGEVEDDDSDLSDDEDHP) are cytoplasmic.

Belongs to the LIMR family. LMBRD1 subfamily.

It is found in the endoplasmic reticulum membrane. Its subcellular location is the lysosome membrane. It localises to the cell membrane. Functionally, lysosomal membrane chaperone required to export cobalamin (vitamin B12) from the lysosome to the cytosol, allowing its conversion to cofactors. Targets ABCD4 transporter from the endoplasmic reticulum to the lysosome. Then forms a complex with lysosomal ABCD4 and cytoplasmic MMACHC to transport cobalamin across the lysosomal membrane. May play a role in mediating and regulating the internalization of the insulin receptor. The sequence is that of Lysosomal cobalamin transport escort protein LMBD1 (lmbrd1) from Xenopus laevis (African clawed frog).